Consider the following 756-residue polypeptide: ATP-dependent 6-phosphofructokinase 2 (756 aa).

Residues 1–393 form an N-terminal catalytic PFK domain 1 region; sequence MEQKFKKGKD…KQTYLNFVSI (393 aa). ATP is bound by residues G20, 81–82, and 111–114; these read RC and GDGS. Mg(2+) is bound at residue D112. Substrate is bound by residues 157–159, R194, 201–203, E257, R285, and 291–294; these read SID, MGR, and HLQR. The active-site Proton acceptor is the D159. The tract at residues 394–404 is interdomain linker; the sequence is PLSTTMPSRTK. The segment at 405 to 756 is C-terminal regulatory PFK domain 2; that stretch reads TFAVVHIGSP…KKPQEAVLSS (352 aa). Residues R474, 530-534, 575-577, E632, R658, and 664-667 each bind beta-D-fructose 2,6-bisphosphate; these read TISNN, MGS, and YSQL.

Belongs to the phosphofructokinase type A (PFKA) family. ATP-dependent PFK group I subfamily. Eukaryotic two domain clade 'E' sub-subfamily. In terms of assembly, homotetramer. Mg(2+) is required as a cofactor.

It is found in the cytoplasm. The enzyme catalyses beta-D-fructose 6-phosphate + ATP = beta-D-fructose 1,6-bisphosphate + ADP + H(+). The protein operates within carbohydrate degradation; glycolysis; D-glyceraldehyde 3-phosphate and glycerone phosphate from D-glucose: step 3/4. With respect to regulation, allosterically activated by ADP, AMP, or fructose 2,6-bisphosphate, and allosterically inhibited by ATP or citrate. Catalyzes the phosphorylation of D-fructose 6-phosphate to fructose 1,6-bisphosphate by ATP, the first committing step of glycolysis. The chain is ATP-dependent 6-phosphofructokinase 2 from Caenorhabditis elegans.